The primary structure comprises 249 residues: Acetylglutamate kinase (249 aa).

Substrate contacts are provided by residues 36–37 (GG), R58, and N147.

This sequence belongs to the acetylglutamate kinase family. ArgB subfamily.

The protein localises to the cytoplasm. It catalyses the reaction N-acetyl-L-glutamate + ATP = N-acetyl-L-glutamyl 5-phosphate + ADP. It participates in amino-acid biosynthesis; L-arginine biosynthesis; N(2)-acetyl-L-ornithine from L-glutamate: step 2/4. Its function is as follows. Catalyzes the ATP-dependent phosphorylation of N-acetyl-L-glutamate. The chain is Acetylglutamate kinase from Thermus thermophilus (strain ATCC 27634 / DSM 579 / HB8).